A 155-amino-acid chain; its full sequence is Large ribosomal subunit protein uL30 (155 aa).

Belongs to the universal ribosomal protein uL30 family. In terms of assembly, part of the 50S ribosomal subunit.

This chain is Large ribosomal subunit protein uL30, found in Pyrococcus abyssi (strain GE5 / Orsay).